The primary structure comprises 289 residues: Paired box protein 5 homolog (289 aa).

The paired DNA-binding region spans 29–155 (SHTGVNQLGG…SSINRIVRNK (127 aa)). The segment at 32 to 88 (GVNQLGGVFVNGRPLADTVRAQIVEMSQHGTRPCDISRQLKVSHGCVSKILGRYYST) is PAI subdomain. The RED subdomain stretch occupies residues 107 to 155 (RVVECIAGYKRANPTMFAWEIRQKLIEDQICGEENVPSVSSINRIVRNK). Low complexity-rich tracts occupy residues 166 to 179 (SVTS…SATS) and 189 to 198 (VQQHMQQSTS). The interval 166–198 (SVTSSAARPSSATSHHQRSPPRGVQQHMQQSTS) is disordered.

The protein resides in the nucleus. It is found in the chromosome. In terms of biological role, transcription factor. Binds to specific DNA sequence motifs in regulatory elements, for example in the genes encoding transcription factor lin-48, apoptosis regulator ced-9 and neuropeptide-like protein nlp-2. Specifies cell fate, playing an essential role in embryonic and larval development. Involved in morphogenesis of the vulva and uterus in hermaphrodites and of the rectal epithelium of the tail in males. Plays multiple roles in the development of the egg-laying system, acting in both lin-3/EGF-pathway-dependent and -independent processes. Positively regulates expression of neuropeptide-like proteins nlp-2 and nlp-7 in uvl cells in an EGF-pathway-dependent manner. Involved in negatively modulating apoptosis in germline and somatic cells, acting in partial redundancy with transcription factor pax-2, probably by directly regulating transcription of ced-9. Positively regulates transcription of lin-48 in hindgut cells and functions in the development of the hindgut. The sequence is that of Paired box protein 5 homolog from Caenorhabditis elegans.